Here is a 728-residue protein sequence, read N- to C-terminus: 1,4-alpha-glucan branching enzyme GlgB (728 aa).

D405 serves as the catalytic Nucleophile. E458 acts as the Proton donor in catalysis.

Belongs to the glycosyl hydrolase 13 family. GlgB subfamily. In terms of assembly, monomer.

It carries out the reaction Transfers a segment of a (1-&gt;4)-alpha-D-glucan chain to a primary hydroxy group in a similar glucan chain.. Its pathway is glycan biosynthesis; glycogen biosynthesis. Its function is as follows. Catalyzes the formation of the alpha-1,6-glucosidic linkages in glycogen by scission of a 1,4-alpha-linked oligosaccharide from growing alpha-1,4-glucan chains and the subsequent attachment of the oligosaccharide to the alpha-1,6 position. This chain is 1,4-alpha-glucan branching enzyme GlgB, found in Shigella boydii serotype 4 (strain Sb227).